Here is a 96-residue protein sequence, read N- to C-terminus: Defensin-like protein 151 (96 aa).

The first 29 residues, 1–29, serve as a signal peptide directing secretion; it reads MKKPSQLSATILTIFVILAIGVMVKETLG. 4 cysteine pairs are disulfide-bonded: C35–C88, C48–C68, C53–C82, and C57–C84.

This sequence belongs to the DEFL family.

It is found in the secreted. This chain is Defensin-like protein 151 (LCR17), found in Arabidopsis thaliana (Mouse-ear cress).